A 368-amino-acid chain; its full sequence is Homoserine dehydrogenase (368 aa).

NAD(+)-binding residues include Val-12, Gly-14, and Val-15. Val-15 is a binding site for NADP(+). Val-15, Lys-59, Thr-95, Ser-96, and Lys-119 together coordinate NADPH. Thr-95 is an NAD(+) binding site. Thr-95 contacts NADP(+). NADP(+) is bound at residue Lys-119. Na(+)-binding residues include Glu-146, Val-149, Ala-151, and Leu-153. Positions 209 and 212 each coordinate NADP(+). 2 residues coordinate L-homoserine: Glu-212 and Asp-223. Lys-227 serves as the catalytic Proton donor. Gly-349 contributes to the NAD(+) binding site. Gly-349 contributes to the NADP(+) binding site. Residue Gly-349 participates in NADPH binding.

It belongs to the homoserine dehydrogenase family. A metal cation serves as cofactor.

The catalysed reaction is L-homoserine + NADP(+) = L-aspartate 4-semialdehyde + NADPH + H(+). It carries out the reaction L-homoserine + NAD(+) = L-aspartate 4-semialdehyde + NADH + H(+). The protein operates within amino-acid biosynthesis; L-methionine biosynthesis via de novo pathway; L-homoserine from L-aspartate: step 3/3. It participates in amino-acid biosynthesis; L-threonine biosynthesis; L-threonine from L-aspartate: step 3/5. In terms of biological role, catalyzes the conversion of L-aspartate-beta-semialdehyde (L-Asa) to L-homoserine (L-Hse), the third step in the biosynthesis of amino acids that derive from aspartate (the aspartate family of amino acids), including methioinine and threonine, the latter of which is a precursor to isoleucine; production of homoserine leads to a branch-point in the pathway as it can either be O-phosphorylated for processing to threonine, or O-acylated for processing to methionine. This is Homoserine dehydrogenase from Emericella nidulans (strain FGSC A4 / ATCC 38163 / CBS 112.46 / NRRL 194 / M139) (Aspergillus nidulans).